The primary structure comprises 415 residues: F-box protein ETP1 (415 aa).

An F-box domain is found at 1-46 (MTIPDLCNDLVDEILCRVPARNLKRLRSTSKRWNRLFKDDRRFARE).

In terms of assembly, interacts with EIN2 (via C-terminus).

Its function is as follows. Negative regulator of EIN2 protein stability. The polypeptide is F-box protein ETP1 (Arabidopsis thaliana (Mouse-ear cress)).